A 419-amino-acid polypeptide reads, in one-letter code: D-amino acid dehydrogenase (419 aa).

3–17 provides a ligand contact to FAD; the sequence is VLILGGGVVGVTSAY.

Belongs to the DadA oxidoreductase family. FAD serves as cofactor.

The enzyme catalyses a D-alpha-amino acid + A + H2O = a 2-oxocarboxylate + AH2 + NH4(+). It participates in amino-acid degradation; D-alanine degradation; NH(3) and pyruvate from D-alanine: step 1/1. In terms of biological role, oxidative deamination of D-amino acids. This Methylobacterium radiotolerans (strain ATCC 27329 / DSM 1819 / JCM 2831 / NBRC 15690 / NCIMB 10815 / 0-1) protein is D-amino acid dehydrogenase.